The sequence spans 276 residues: 4-deoxy-L-threo-5-hexosulose-uronate ketol-isomerase (276 aa).

H194, H196, E201, and H243 together coordinate Zn(2+).

The protein belongs to the KduI family. Zn(2+) is required as a cofactor.

The enzyme catalyses 5-dehydro-4-deoxy-D-glucuronate = 3-deoxy-D-glycero-2,5-hexodiulosonate. Its pathway is glycan metabolism; pectin degradation; 2-dehydro-3-deoxy-D-gluconate from pectin: step 4/5. Its function is as follows. Catalyzes the isomerization of 5-dehydro-4-deoxy-D-glucuronate to 3-deoxy-D-glycero-2,5-hexodiulosonate. This chain is 4-deoxy-L-threo-5-hexosulose-uronate ketol-isomerase, found in Shouchella clausii (strain KSM-K16) (Alkalihalobacillus clausii).